Reading from the N-terminus, the 438-residue chain is Aspartyl protease 25 (438 aa).

A signal peptide spans 1–23 (MAATTTIPLLLLLLAATVAAAAA). Residues 79-433 (YVVRAGLGSP…DVANSRVGFA (355 aa)) form the Peptidase A1 domain. Asp-97 is an active-site residue. Cys-107 and Cys-113 are disulfide-bonded. Residues Asn-123, Asn-193, and Asn-282 are each glycosylated (N-linked (GlcNAc...) asparagine). Asp-313 is an active-site residue. Residues Cys-352 and Cys-394 are joined by a disulfide bond.

The protein belongs to the peptidase A1 family.

Anther-specific aspartic protease involved in tapetal programmed cell death (PCD). Directly regulated by the transcription factor EAT1/DTD in anthers during tapetum PCD and degeneration. This Oryza sativa subsp. japonica (Rice) protein is Aspartyl protease 25.